The following is a 345-amino-acid chain: L-threonine 3-dehydrogenase (345 aa).

Residue Cys-42 participates in Zn(2+) binding. Residues Thr-44 and His-47 each act as charge relay system in the active site. Zn(2+) is bound by residues His-67, Glu-68, Cys-97, Cys-100, Cys-103, and Cys-111. NAD(+) contacts are provided by residues Ile-179, Asp-199, Arg-204, 266–268, and 290–291; these read LGI and IY.

The protein belongs to the zinc-containing alcohol dehydrogenase family. In terms of assembly, homotetramer. It depends on Zn(2+) as a cofactor.

The protein localises to the cytoplasm. It carries out the reaction L-threonine + NAD(+) = (2S)-2-amino-3-oxobutanoate + NADH + H(+). It functions in the pathway amino-acid degradation; L-threonine degradation via oxydo-reductase pathway; glycine from L-threonine: step 1/2. Its function is as follows. Catalyzes the NAD(+)-dependent oxidation of L-threonine to 2-amino-3-ketobutyrate. The polypeptide is L-threonine 3-dehydrogenase (Rhizobium johnstonii (strain DSM 114642 / LMG 32736 / 3841) (Rhizobium leguminosarum bv. viciae)).